The chain runs to 43 residues: Peroxidase (43 aa).

The protein belongs to the peroxidase family. Classical plant (class III) peroxidase subfamily. Ca(2+) serves as cofactor. Heme b is required as a cofactor.

The enzyme catalyses 2 a phenolic donor + H2O2 = 2 a phenolic radical donor + 2 H2O. In terms of biological role, removal of H(2)O(2), oxidation of toxic reductants, biosynthesis and degradation of lignin, suberization, auxin catabolism, response to environmental stresses such as wounding, pathogen attack and oxidative stress. These functions might be dependent on each isozyme/isoform in each plant tissue. This is Peroxidase from Cynara cardunculus var. scolymus (Globe artichoke).